The chain runs to 788 residues: Protein HID1 (788 aa).

G2 carries the N-myristoyl glycine lipid modification. A compositionally biased stretch (low complexity) spans 297 to 313; the sequence is ATSTSPTVDGTTTGTAM. Disordered stretches follow at residues 297–316 and 571–680; these read ATST…MDDA and PPSI…QWSP. Polar residues-rich tracts occupy residues 590–600 and 643–680; these read RTGSQEGTSME and PESQ…QWSP. Phosphoserine is present on residues S653 and S670.

The protein belongs to the hid-1 family.

The protein localises to the cytoplasm. It localises to the golgi apparatus membrane. This Mus musculus (Mouse) protein is Protein HID1 (Hid1).